A 475-amino-acid polypeptide reads, in one-letter code: MSPQTETKAGVGFKAGVKDYRLTYYTPEYETKETDILAAFRMTPQPGVPPEEAGAAVAAESSTGTWTTVWTDGLTSLDRYKGRCYDIEPVAGEENQYIAYVAYPLDLFEEGSVTNLFTSIVGNVFGFKALRALRLEDLRIPPSYVKTFQGPPHGIQVERDKLNKYGRPLLGCTIKPKLGLSAKNYGRAVYECLRGGLDFTKDDENVNSQPFMRWRDRFLFVAEAIFKSQAETGEIKGHYSNATAGTSEEMLKRAACARELGVPIIMHDYLTGGFTANTSLAHYCRDNGLLLHIHRAMHAVIDRQKNHGMHFRVLAKASRLSGGDHIHAGTVVGKLEGEREVTSGFVDSLRDDYIERDRSRGIYFTQDWVSLPGVLPVASGGIHVWHMPALTEIFGDDSVLQFGGGTLGHPWGNAPGAVANRVASEACVQARNEGRDLAREGNEVIREASKWSPDLAAACEVWKEIKFEYETIDTL.

A propeptide spanning residues Met-1–Ser-2 is cleaved from the precursor. The residue at position 3 (Pro-3) is an N-acetylproline. Lys-14 carries the N6,N6,N6-trimethyllysine modification. Asn-123 and Thr-173 together coordinate substrate. Residue Lys-175 is the Proton acceptor of the active site. Lys-177 is a substrate binding site. Positions 201, 203, and 204 each coordinate Mg(2+). Residue Lys-201 is modified to N6-carboxylysine. His-294 (proton acceptor) is an active-site residue. Substrate contacts are provided by Arg-295, His-327, and Ser-379.

This sequence belongs to the RuBisCO large chain family. Type I subfamily. In terms of assembly, heterohexadecamer of 8 large chains and 8 small chains. Mg(2+) serves as cofactor.

The protein localises to the plastid. It carries out the reaction 2 (2R)-3-phosphoglycerate + 2 H(+) = D-ribulose 1,5-bisphosphate + CO2 + H2O. The enzyme catalyses D-ribulose 1,5-bisphosphate + O2 = 2-phosphoglycolate + (2R)-3-phosphoglycerate + 2 H(+). In terms of biological role, ruBisCO catalyzes two reactions: the carboxylation of D-ribulose 1,5-bisphosphate, the primary event in carbon dioxide fixation, as well as the oxidative fragmentation of the pentose substrate in the photorespiration process. Both reactions occur simultaneously and in competition at the same active site. This Aneura mirabilis (Parasitic liverwort) protein is Ribulose bisphosphate carboxylase large chain.